The chain runs to 268 residues: Tryptophan synthase alpha chain (268 aa).

Catalysis depends on proton acceptor residues Glu-49 and Asp-60.

The protein belongs to the TrpA family. In terms of assembly, tetramer of two alpha and two beta chains.

It catalyses the reaction (1S,2R)-1-C-(indol-3-yl)glycerol 3-phosphate + L-serine = D-glyceraldehyde 3-phosphate + L-tryptophan + H2O. Its pathway is amino-acid biosynthesis; L-tryptophan biosynthesis; L-tryptophan from chorismate: step 5/5. The alpha subunit is responsible for the aldol cleavage of indoleglycerol phosphate to indole and glyceraldehyde 3-phosphate. The sequence is that of Tryptophan synthase alpha chain from Aliivibrio fischeri (strain MJ11) (Vibrio fischeri).